The sequence spans 173 residues: Photosystem I assembly protein Ycf3 (173 aa).

TPR repeat units follow at residues 35 to 68, 72 to 105, and 120 to 153; these read AFSY…EIDP, SYIL…NPSL, and GEQA…APNS.

Belongs to the Ycf3 family.

It is found in the plastid. It localises to the chloroplast thylakoid membrane. Functionally, essential for the assembly of the photosystem I (PSI) complex. May act as a chaperone-like factor to guide the assembly of the PSI subunits. The chain is Photosystem I assembly protein Ycf3 from Mesostigma viride (Green alga).